Reading from the N-terminus, the 261-residue chain is Taurine import ATP-binding protein TauB (261 aa).

The ABC transporter domain occupies 4–233 (LQLEGIGAHY…RYSAGESARA (230 aa)). Residue 38–45 (GPSGSGKT) coordinates ATP.

Belongs to the ABC transporter superfamily. Taurine importer (TC 3.A.1.17.1) family. In terms of assembly, the complex is composed of two ATP-binding proteins (TauB), two transmembrane proteins (TauC) and a solute-binding protein (TauA).

The protein localises to the cell inner membrane. It catalyses the reaction taurine(out) + ATP + H2O = taurine(in) + ADP + phosphate + H(+). Functionally, part of the ABC transporter complex TauABC involved in taurine import. Responsible for energy coupling to the transport system. In Pseudomonas syringae pv. tomato (strain ATCC BAA-871 / DC3000), this protein is Taurine import ATP-binding protein TauB.